The sequence spans 412 residues: uncharacterized protein (412 aa).

H49 contacts Zn(2+). E52 (proton acceptor) is an active-site residue. Zn(2+) is bound by residues H53 and E129.

Belongs to the peptidase M16 family. Zn(2+) serves as cofactor.

This is an uncharacterized protein from Rickettsia felis (strain ATCC VR-1525 / URRWXCal2) (Rickettsia azadi).